The following is a 33-amino-acid chain: MSDINATRLPIWGIGCDPCVGDEVTALLTRGEA.

The propeptide occupies 1-10 (MSDINATRLP). The cyclopeptide (Ile-Pro) cross-link spans 11–18 (IWGIGCDP). Positions 12–16 (WGIGC) form a cross-link, 2'-cysteinyl-6'-hydroxytryptophan sulfoxide (Trp-Cys). Positions 19 to 33 (CVGDEVTALLTRGEA) are excised as a propeptide.

This sequence belongs to the MSDIN fungal toxin family. In terms of processing, processed by the macrocyclase-peptidase enzyme POPB to yield a toxic cyclic decapeptide. POPB first removes 10 residues from the N-terminus. Conformational trapping of the remaining peptide forces the enzyme to release this intermediate rather than proceed to macrocyclization. The enzyme rebinds the remaining peptide in a different conformation and catalyzes macrocyclization of the N-terminal 8 residues.

In terms of biological role, toxin belonging to the bicyclic octapeptides amatoxins that acts by binding non-competitively to RNA polymerase II and greatly slowing the elongation of transcripts from target promoters. This Amanita fuligineoides protein is Beta-amanitin proprotein.